The following is a 242-amino-acid chain: Protein FsrB (242 aa).

5 helical membrane passes run Leu-29–Phe-49, Leu-52–Trp-72, Trp-78–Leu-95, Val-100–Trp-120, and Lys-160–Thr-180.

The protein belongs to the AgrB family.

The protein resides in the cell membrane. Its function is as follows. May be involved in the proteolytic processing of a quorum sensing system signal molecule precursor required for the regulation of the virulence genes for gelatinase (gelE) and a serine protease (sprE). The protein is Protein FsrB (fsrB) of Enterococcus faecalis (strain ATCC 47077 / OG1RF).